Here is a 490-residue protein sequence, read N- to C-terminus: Katanin p60 ATPase-containing subunit A-like 1 (490 aa).

M1 carries the post-translational modification N-acetylmethionine. Residues 87 to 182 are disordered; it reads SCQDEPVRDP…ASDGEIPKFD (96 aa). Residues 116-127 are compositionally biased toward basic and acidic residues; it reads SNREVRPLRKDM. Over residues 128–139 the composition is skewed to low complexity; the sequence is AGVGARGPVGRA. The segment covering 143-169 has biased composition (basic and acidic residues); that stretch reads SKSEKPSTSRDKDNRARGKDDKGRKNM. The residue at position 174 (S174) is a Phosphoserine. 248–255 is an ATP binding site; it reads GPPGTGKT.

It belongs to the AAA ATPase family. Katanin p60 subunit A1 subfamily. A-like 1 sub-subfamily. Interacts with KATNB1 and KATNBL1.

The protein resides in the cytoplasm. It is found in the cytoskeleton. The protein localises to the spindle pole. Its subcellular location is the spindle. It carries out the reaction n ATP + n H2O + a microtubule = n ADP + n phosphate + (n+1) alpha/beta tubulin heterodimers.. Its function is as follows. Regulates microtubule dynamics in Sertoli cells, a process that is essential for spermiogenesis and male fertility. Severs microtubules in an ATP-dependent manner, promoting rapid reorganization of cellular microtubule arrays. Has microtubule-severing activity in vitro. The polypeptide is Katanin p60 ATPase-containing subunit A-like 1 (Otolemur garnettii (Small-eared galago)).